Consider the following 296-residue polypeptide: MQSLLLPPASSSGVSAVALRPGFQHSFNHQSLSTRSLPLFNPLLLAPKKKTTISSYQSPPSLSVYGFQIGGSKPSFTPSTVAFSYPTSPSSVPGDNEVDKAKLAQVAKRLEKTSRYFKRLGSIGFWGQLVSTVVAAVILSFSIVVTGKPTSPATFYATASGIAAAFVSVFWSFGYIRLSERLRRTSIDPAKAPPRADVVKGLRSGIMVNILGMGSALLGMQATVGFLVAKALTTSANPFYQGVSQGYSPVLALDVFLVQASANTLLSHFLGLVCSLELLRSVTVPNSESVVVPKVA.

A chloroplast-targeting transit peptide spans 1–90; sequence MQSLLLPPAS…VAFSYPTSPS (90 aa). Helical transmembrane passes span 125–145, 156–176, 208–228, and 250–270; these read FWGQLVSTVVAAVILSFSIVV, YATASGIAAAFVSVFWSFGYI, VNILGMGSALLGMQATVGFLV, and VLALDVFLVQASANTLLSHFL.

In terms of assembly, homomultimer. Part of the translocon complex. In terms of tissue distribution, ubiquitous. Highest expression in green tissues and very low levels in mature pollen.

It localises to the plastid. The protein localises to the chloroplast inner membrane. Functionally, involved in chloroplast protein import across the inner envelope membrane. Also acts as a chloroplast permease regulating the iron transport and homeostasis. Involved in the uptake and sequestration of iron in plastids. The sequence is that of Protein TIC 21, chloroplastic (TIC21) from Arabidopsis thaliana (Mouse-ear cress).